Here is a 230-residue protein sequence, read N- to C-terminus: Heptaprenylglyceryl phosphate synthase (230 aa).

Sn-glycerol 1-phosphate is bound at residue Lys12. Mg(2+) contacts are provided by Asp14 and Thr40. Sn-glycerol 1-phosphate is bound by residues 159–164, Gly189, and 209–210; these read YIEYSG and GD.

It belongs to the GGGP/HepGP synthase family. Group I subfamily. As to quaternary structure, homodimer. Mg(2+) serves as cofactor.

The enzyme catalyses sn-glycerol 1-phosphate + all-trans-heptaprenyl diphosphate = 3-heptaprenyl-sn-glycero-1-phosphate + diphosphate. It functions in the pathway membrane lipid metabolism; glycerophospholipid metabolism. In terms of biological role, prenyltransferase that catalyzes in vivo the transfer of the heptaprenyl moiety of heptaprenyl pyrophosphate (HepPP; 35 carbon atoms) to the C3 hydroxyl of sn-glycerol-1-phosphate (G1P), producing heptaprenylglyceryl phosphate (HepGP). This reaction is an ether-bond-formation step in the biosynthesis of archaea-type G1P-based membrane lipids found in Bacillales. The chain is Heptaprenylglyceryl phosphate synthase from Staphylococcus aureus (strain Mu3 / ATCC 700698).